A 308-amino-acid polypeptide reads, in one-letter code: Methionyl-tRNA formyltransferase (308 aa).

109–112 (SLLP) contacts (6S)-5,6,7,8-tetrahydrofolate.

This sequence belongs to the Fmt family.

It catalyses the reaction L-methionyl-tRNA(fMet) + (6R)-10-formyltetrahydrofolate = N-formyl-L-methionyl-tRNA(fMet) + (6S)-5,6,7,8-tetrahydrofolate + H(+). Functionally, attaches a formyl group to the free amino group of methionyl-tRNA(fMet). The formyl group appears to play a dual role in the initiator identity of N-formylmethionyl-tRNA by promoting its recognition by IF2 and preventing the misappropriation of this tRNA by the elongation apparatus. In Rhizorhabdus wittichii (strain DSM 6014 / CCUG 31198 / JCM 15750 / NBRC 105917 / EY 4224 / RW1) (Sphingomonas wittichii), this protein is Methionyl-tRNA formyltransferase.